A 386-amino-acid chain; its full sequence is Acetylornithine aminotransferase (386 aa).

Pyridoxal 5'-phosphate contacts are provided by residues Gly94–Thr95 and Phe121. Residue Arg124 participates in N(2)-acetyl-L-ornithine binding. Asp206–Gln209 is a binding site for pyridoxal 5'-phosphate. Position 235 is an N6-(pyridoxal phosphate)lysine (Lys235). Ser263 is a binding site for N(2)-acetyl-L-ornithine. Position 264 (Thr264) interacts with pyridoxal 5'-phosphate.

This sequence belongs to the class-III pyridoxal-phosphate-dependent aminotransferase family. ArgD subfamily. As to quaternary structure, homodimer. Pyridoxal 5'-phosphate is required as a cofactor.

It localises to the cytoplasm. The catalysed reaction is N(2)-acetyl-L-ornithine + 2-oxoglutarate = N-acetyl-L-glutamate 5-semialdehyde + L-glutamate. Its pathway is amino-acid biosynthesis; L-arginine biosynthesis; N(2)-acetyl-L-ornithine from L-glutamate: step 4/4. This chain is Acetylornithine aminotransferase, found in Listeria monocytogenes serotype 4b (strain F2365).